A 168-amino-acid polypeptide reads, in one-letter code: Desumoylating isopeptidase 1 (168 aa).

Residues 7–149 (YPVKLYVYDL…FGQALRPFLD (143 aa)) form the PPPDE domain. His38 is an active-site residue. The Nuclear export signal 1 signature appears at 83 to 91 (IFLEYLSSL). Cys108 is an active-site residue. Residues 139-153 (PFGQALRPFLDSIQI) carry the Nuclear export signal 2 motif.

The protein belongs to the DeSI family. Homodimer. Interacts with UBQLN4; leading to the export of UBQLN4 from the nucleus.

The protein resides in the cytoplasm. It localises to the nucleus. The catalysed reaction is S-hexadecanoyl-L-cysteinyl-[protein] + H2O = L-cysteinyl-[protein] + hexadecanoate + H(+). Its function is as follows. Protease which deconjugates SUMO1, SUMO2 and SUMO3 from some substrate proteins. Has isopeptidase but not SUMO-processing activity. Desumoylates ZBTB46. Collaborates with UBQLN4 in the export of ubiquitinated proteins from the nucleus to the cytoplasm. Exhibits palmitoyl protein thioesterase (S-depalmitoylation) activity towards synthetic substrates 4-methylumbelliferyl-6-S-palmitoyl-beta-D-glucopyranoside and S-depalmitoylation probe 5 (DPP-5). This chain is Desumoylating isopeptidase 1 (Desi1), found in Rattus norvegicus (Rat).